A 148-amino-acid polypeptide reads, in one-letter code: MSVLKEFKAFAVKGNVVDMAVGIIIGAAFGKIVSSFVGDVIMPPLGLLIGGVDFSDLAVTLRPAQGTAPAVLLAYGKFIQTVIDFIIVAFAIFMGVKAINRLKREEAKAPTLPPTPSKQEILLGEIRDLLKEQSKPAAPITVDPARTL.

The next 2 membrane-spanning stretches (helical) occupy residues alanine 9–phenylalanine 29 and isoleucine 79–isoleucine 99.

This sequence belongs to the MscL family. As to quaternary structure, homopentamer.

It localises to the cell inner membrane. Its function is as follows. Channel that opens in response to stretch forces in the membrane lipid bilayer. May participate in the regulation of osmotic pressure changes within the cell. The polypeptide is Large-conductance mechanosensitive channel (Pseudomonas syringae pv. syringae (strain B728a)).